Reading from the N-terminus, the 344-residue chain is MASGVGAAFEELPHDGTCDECEPDEAPGAEEVCRECGFCYCRRHAEAHRQKFLSHHLAEYVHGAQAWTPPADGEGAGKEEAEVKVEQEREIESEAGEESESEEESESEEESETEEESEDESDEESEEDSEEEMEDEQESEAEEDNQEEGESEAEGETEAESEFDPEIEMEAERVAKRKCPDHGLDLSTYCQEDRQLICVLCPVIGAHQGHQLSTLDEAFEELRSKDSGGLKAAMIELVERLKFKSSDPKVTRDQMKMFIQQEFKKVQKVIADEEQKALHLVDIQEAMATAHVTEILADIQSHMDRLMTQMAQAKEQLDTSNESAEPKAEGDEEGPSGASEEEDT.

2 disordered regions span residues 1 to 25 (MASGVGAAFEELPHDGTCDECEPDE) and 68 to 165 (TPPA…EFDP). The span at 75 to 92 (GAGKEEAEVKVEQEREIE) shows a compositional bias: basic and acidic residues. Acidic residues predominate over residues 93–165 (SEAGEESESE…ETEAESEFDP (73 aa)). A B box-type zinc finger spans residues 174 to 215 (VAKRKCPDHGLDLSTYCQEDRQLICVLCPVIGAHQGHQLSTL). The Zn(2+) site is built by Cys-179, His-182, Cys-201, and His-207. Residues 290 to 325 (AHVTEILADIQSHMDRLMTQMAQAKEQLDTSNESAE) adopt a coiled-coil conformation. A disordered region spans residues 309–344 (QMAQAKEQLDTSNESAEPKAEGDEEGPSGASEEEDT). Residues 330 to 344 (GDEEGPSGASEEEDT) are compositionally biased toward acidic residues. A phosphoserine mark is found at Ser-336 and Ser-339.

In terms of assembly, interacts (via coiled coil) with TRIM17 (via coiled coil).

May play a role in the process of differentiation and maturation of neuronal cells. May regulate the activity of TRIM17. Is a negative regulator of PAX6 expression. The chain is Tripartite motif-containing protein 44 (TRIM44) from Pongo abelii (Sumatran orangutan).